A 346-amino-acid polypeptide reads, in one-letter code: Mitogen-activated protein kinase kinase 1c (346 aa).

The 263-residue stretch at 70 to 332 (LELVRFLGKG…TTDLLKHPFL (263 aa)) folds into the Protein kinase domain. ATP contacts are provided by residues 76–84 (LGKGAGGTV) and Lys99. Catalysis depends on Asp194, which acts as the Proton acceptor.

It belongs to the protein kinase superfamily. STE Ser/Thr protein kinase family. MAP kinase kinase subfamily.

The enzyme catalyses L-seryl-[protein] + ATP = O-phospho-L-seryl-[protein] + ADP + H(+). It catalyses the reaction L-threonyl-[protein] + ATP = O-phospho-L-threonyl-[protein] + ADP + H(+). The catalysed reaction is L-tyrosyl-[protein] + ATP = O-phospho-L-tyrosyl-[protein] + ADP + H(+). The CERK1, MEKK1a/b, MKK1a/b/c and MPK4a/b proteins are involved in pathogen defense. The pathway induces rapid growth inhibition, cell wall depositions and accumulation of defense-related transcripts. This protein is required for full defense response to fungal pathogen chitin. This is Mitogen-activated protein kinase kinase 1c from Physcomitrium patens (Spreading-leaved earth moss).